The primary structure comprises 301 residues: GPN-loop GTPase 3 (301 aa).

Residue 13–18 (GAGKST) participates in GTP binding. Positions 70–72 (GPN) match the Gly-Pro-Asn (GPN)-loop; involved in dimer interface motif. A GTP-binding site is contributed by 176–179 (SKMD). Residues 212 to 232 (IAEGQDAEDDESKAPDEKDQV) form a disordered region. Positions 223–232 (SKAPDEKDQV) are enriched in basic and acidic residues.

The protein belongs to the GPN-loop GTPase family. Heterodimers with GPN1 or GPN2. Binds to RNA polymerase II (RNAPII).

Functionally, small GTPase required for proper nuclear import of RNA polymerase II and III (RNAPII and RNAPIII). May act at an RNAP assembly step prior to nuclear import. This Gibberella zeae (strain ATCC MYA-4620 / CBS 123657 / FGSC 9075 / NRRL 31084 / PH-1) (Wheat head blight fungus) protein is GPN-loop GTPase 3.